Consider the following 317-residue polypeptide: MRDIAVFSGSAHPDLAEEVCAQLGVPLSPTRVSRFANDCLEVQLMANCRERDVFLVQPLVTPVQEHLVELLMMCDAARGASAGRITVVMPHYSYARSDKKDAPRISLGGRLVADLLVAAGASRVLAMTLHSPQVHGFFSVPVDHLHALRELAAHFRQYDLSRATVVSPDLGNAKEAAAFARMLGAQVAAGAKQRYADDRVSISSVIGDVAGRDVIVLDDEIAKGSTVLELLDRLRESGPRTIRLACTHGLFAAGALGRLSEQPDVLEIVCTNTVPVPADDHTDKLRILSIAPALAEAVRRIHNGESVSALFDARPAG.

The segment at 211–224 (GRDVIVLDDEIAKG) is binding of phosphoribosylpyrophosphate.

Belongs to the ribose-phosphate pyrophosphokinase family.

It catalyses the reaction D-ribose 5-phosphate + ATP = 5-phospho-alpha-D-ribose 1-diphosphate + AMP + H(+). The protein is Putative ribose-phosphate pyrophosphokinase of Streptomyces coelicolor (strain ATCC BAA-471 / A3(2) / M145).